Reading from the N-terminus, the 54-residue chain is Ribulose bisphosphate carboxylase large chain (54 aa).

A propeptide spanning residues 1–2 (MS) is cleaved from the precursor. Pro3 carries the post-translational modification N-acetylproline. Lys14 bears the N6,N6,N6-trimethyllysine mark.

Belongs to the RuBisCO large chain family. Type I subfamily. As to quaternary structure, heterohexadecamer of 8 large chains and 8 small chains.

It localises to the plastid. It is found in the chloroplast. The enzyme catalyses 2 (2R)-3-phosphoglycerate + 2 H(+) = D-ribulose 1,5-bisphosphate + CO2 + H2O. It carries out the reaction D-ribulose 1,5-bisphosphate + O2 = 2-phosphoglycolate + (2R)-3-phosphoglycerate + 2 H(+). Its function is as follows. RuBisCO catalyzes two reactions: the carboxylation of D-ribulose 1,5-bisphosphate, the primary event in carbon dioxide fixation, as well as the oxidative fragmentation of the pentose substrate in the photorespiration process. Both reactions occur simultaneously and in competition at the same active site. This chain is Ribulose bisphosphate carboxylase large chain (rbcL), found in Icacina mannii.